The primary structure comprises 451 residues: Phenylalanine--tRNA ligase, mitochondrial (451 aa).

Substrate is bound by residues Ser157–Gln160, Arg179, Gln186–Tyr188, and Gln193–Glu195. Position 202 is an N6-acetyllysine (Lys202). Residues Glu287 and Phe312 each coordinate substrate. Residues Ser358–Arg450 form the FDX-ACB domain.

This sequence belongs to the class-II aminoacyl-tRNA synthetase family. As to quaternary structure, monomer.

It is found in the mitochondrion matrix. The protein localises to the mitochondrion. The catalysed reaction is tRNA(Phe) + L-phenylalanine + ATP = L-phenylalanyl-tRNA(Phe) + AMP + diphosphate + H(+). Functionally, is responsible for the charging of tRNA(Phe) with phenylalanine in mitochondrial translation. To a lesser extent, also catalyzes direct attachment of m-Tyr (an oxidized version of Phe) to tRNA(Phe), thereby opening the way for delivery of the misacylated tRNA to the ribosome and incorporation of ROS-damaged amino acid into proteins. In Mus musculus (Mouse), this protein is Phenylalanine--tRNA ligase, mitochondrial (Fars2).